A 1458-amino-acid polypeptide reads, in one-letter code: Secretory phospholipase A2 receptor (1458 aa).

The N-terminal stretch at 1–23 (MLLSLLLLLLLGAPRRCTEGAAA) is a signal peptide. At 24–1393 (ALSPERVLKW…EHPGKGPSHS (1370 aa)) the chain is on the extracellular side. 17 cysteine pairs are disulfide-bonded: C49–C62, C87–C104, C176–C202, C190–C217, C258–C352, C328–C344, C404–C499, C476–C491, C615–C632, C697–C794, C772–C786, C838–C935, C912–C927, C1065–C1085, C1207–C1221, C1278–C1373, and C1350–C1365. The Ricin B-type lectin domain maps to 49–113 (CIQAGKSVLT…CDSTHVSLRW (65 aa)). An N-linked (GlcNAc...) asparagine glycan is attached at N91. One can recognise a Fibronectin type-II domain in the interval 171 to 219 (AHGTPCMFPFQYNHQWHHECTREGRQDDSLWCATTSRYERDEKWGFCPD). C-type lectin domains lie at 227–356 (CDAV…KKYL), 374–502 (TDCE…CKKP), 511–645 (SGCQ…KQPV), 660–798 (HPCY…KIPR), 815–939 (LFHQ…KRKT), 954–1098 (GTCP…EKIQ), 1117–1231 (LEYG…AICH), and 1243–1376 (ELCS…CKMK). Residues N408, N431, and N452 are each glycosylated (N-linked (GlcNAc...) asparagine). Residues 1394-1416 (IVPLAVALTLVVILAIITLSFYI) form a helical membrane-spanning segment. Topologically, residues 1417-1458 (YKQNKGFFRRLAGVGNSYYPTTNFSTIHLEENILISDLEKND) are cytoplasmic. An Endocytosis signal motif is present at residues 1432–1438 (NSYYPTT).

In terms of assembly, interacts with sPLA2-IB/PLA2G1B; this interaction mediates intracellular signaling as well as clearance of extracellular sPLA2-IB/PLA2G1B via endocytotic pathway. Interacts with sPLA2-X/PLA2G10; this interaction mediates sPLA2-X/PLA2G10 clearance and inactivation. Post-translationally, the secretory phospholipase A2 receptor form may be produced by the action of metalloproteinases. It contains all extracellular domains and only lacks transmembrane and cytosolic regions. It is however unclear whether this form is produced by proteolytic cleavage as suggested by some experiments, or by alternative splicing. As to expression, lung, skeletal muscle, brain, kidney and heart.

Its subcellular location is the cell membrane. The protein localises to the secreted. In terms of biological role, receptor for secretory phospholipase A2 (sPLA2). Also able to bind to snake PA2-like toxins. Although its precise function remains unclear, binding of sPLA2 to its receptor participates in both positive and negative regulation of sPLA2 functions as well as clearance of sPLA2. Binding of sPLA2-IB/PLA2G1B induces various effects depending on the cell type, such as activation of the mitogen-activated protein kinase (MAPK) cascade to induce cell proliferation, the production of lipid mediators, selective release of arachidonic acid in bone marrow-derived mast cells. In neutrophils, binding of sPLA2-IB/PLA2G1B can activate p38 MAPK to stimulate elastase release and cell adhesion. May be involved in responses in pro-inflammatory cytokine productions during endotoxic shock. Also has endocytic properties and rapidly internalizes sPLA2 ligands, which is particularly important for the clearance of extracellular sPLA2s to protect their potent enzymatic activities. The soluble secretory phospholipase A2 receptor form is circulating and acts as a negative regulator of sPLA2 functions by blocking the biological functions of sPLA2-IB/PLA2G1B and sPLA2-X/PLA2G10. The protein is Secretory phospholipase A2 receptor (PLA2R1) of Oryctolagus cuniculus (Rabbit).